We begin with the raw amino-acid sequence, 446 residues long: Beta-glucosidase A (446 aa).

Catalysis depends on Glu166, which acts as the Proton donor. Catalysis depends on Glu351, which acts as the Nucleophile.

Belongs to the glycosyl hydrolase 1 family.

The enzyme catalyses Hydrolysis of terminal, non-reducing beta-D-glucosyl residues with release of beta-D-glucose.. Its pathway is glycan metabolism; cellulose degradation. This Thermotoga maritima (strain ATCC 43589 / DSM 3109 / JCM 10099 / NBRC 100826 / MSB8) protein is Beta-glucosidase A (bglA).